Reading from the N-terminus, the 281-residue chain is Acyl-[acyl-carrier-protein]--UDP-N-acetylglucosamine O-acyltransferase (281 aa).

This sequence belongs to the transferase hexapeptide repeat family. LpxA subfamily. As to quaternary structure, homotrimer.

The protein localises to the cytoplasm. The enzyme catalyses a (3R)-hydroxyacyl-[ACP] + UDP-N-acetyl-alpha-D-glucosamine = a UDP-3-O-[(3R)-3-hydroxyacyl]-N-acetyl-alpha-D-glucosamine + holo-[ACP]. It participates in glycolipid biosynthesis; lipid IV(A) biosynthesis; lipid IV(A) from (3R)-3-hydroxytetradecanoyl-[acyl-carrier-protein] and UDP-N-acetyl-alpha-D-glucosamine: step 1/6. In terms of biological role, involved in the biosynthesis of lipid A, a phosphorylated glycolipid that anchors the lipopolysaccharide to the outer membrane of the cell. The polypeptide is Acyl-[acyl-carrier-protein]--UDP-N-acetylglucosamine O-acyltransferase (Rickettsia bellii (strain OSU 85-389)).